The following is a 275-amino-acid chain: MRLVILDDYALASEWAAKYICNCIIQFNPGPDKYFTLGLPTGSTPLGCYKKLIEYHKSGDLSFKYVKTFNMDEYVGLPRDHPESYHSYMWNNFFKHIDIDPNNAHILDGNASDLQAECEDFERKIKEAGGIELFVGGIGPDGHIAFNEPGSSLVSRTRLKTLAMDTILANAKYFDGDLSKVPTMALTVGVGTVMDAKEVMILITGAHKAFALYKAIEEGVNHMWTVSAFQQHPRTIFVCDEDATLELRVKTVKYFKGLMHVHNRLVDPLLSMKKN.

D72 functions as the Proton acceptor; for enolization step in the catalytic mechanism. The stretch at 102-131 (NNAHILDGNASDLQAECEDFERKIKEAGGI) forms a coiled coil. The active-site For ring-opening step is the D141. H143 acts as the Proton acceptor; for ring-opening step in catalysis. The For ring-opening step role is filled by E148.

It belongs to the glucosamine/galactosamine-6-phosphate isomerase family. As to quaternary structure, homohexamer.

It is found in the cytoplasm. It carries out the reaction alpha-D-glucosamine 6-phosphate + H2O = beta-D-fructose 6-phosphate + NH4(+). In terms of biological role, catalyzes the reversible conversion of alpha-D-glucosamine 6-phosphate (GlcN-6P) into beta-D-fructose 6-phosphate (Fru-6P) and ammonium ion, a regulatory reaction step in de novo uridine diphosphate-N-acetyl-alpha-D-glucosamine (UDP-GlcNAc) biosynthesis via hexosamine pathway. This Xenopus laevis (African clawed frog) protein is Glucosamine-6-phosphate deaminase 2.